Reading from the N-terminus, the 236-residue chain is Probable methylthioribulose-1-phosphate dehydratase (236 aa).

Residues 1–29 (MQNVQQPKKRKLSDEIIAEDEDYQRDPEH) form a disordered region. Cysteine 103 is a substrate binding site. Residues histidine 121, histidine 123, and histidine 201 each coordinate Zn(2+).

It belongs to the aldolase class II family. MtnB subfamily. It depends on Zn(2+) as a cofactor.

The protein resides in the cytoplasm. The enzyme catalyses 5-(methylsulfanyl)-D-ribulose 1-phosphate = 5-methylsulfanyl-2,3-dioxopentyl phosphate + H2O. It functions in the pathway amino-acid biosynthesis; L-methionine biosynthesis via salvage pathway; L-methionine from S-methyl-5-thio-alpha-D-ribose 1-phosphate: step 2/6. Functionally, catalyzes the dehydration of methylthioribulose-1-phosphate (MTRu-1-P) into 2,3-diketo-5-methylthiopentyl-1-phosphate (DK-MTP-1-P). This is Probable methylthioribulose-1-phosphate dehydratase from Trichoplax adhaerens (Trichoplax reptans).